The following is a 462-amino-acid chain: Golgi-associated PDZ and coiled-coil motif-containing protein (462 aa).

The stretch at 83–194 (KAQSVSQINH…EDEALRGHIA (112 aa)) forms a coiled coil. Residues 288 to 371 (KVLLLKEDHE…EIEFEVVYVA (84 aa)) enclose the PDZ domain. Residues 427 to 449 (TDTHENGDLGTASETPLDDGASK) form a disordered region.

In terms of assembly, homooligomer. Interacts with FZD5. Interacts with FZD8. Interacts with GRID2 and BECN1. Interacts with CSPG5. Interacts with CLCN3. Interacts with STX6. Interacts with CFTR. Interacts with ASIC3. Interacts with GOLGA3. Interacts with NLGN1. Interacts with RHOQ. Interacts with MARCHF2; the interaction leads to CFTR ubiquitination and degradation. May interact with CACNG2. Interacts with CCDC62.

It is found in the cytoplasm. The protein resides in the golgi apparatus membrane. The protein localises to the golgi apparatus. It localises to the trans-Golgi network membrane. Its subcellular location is the synapse. It is found in the postsynaptic density. The protein resides in the cell projection. The protein localises to the dendrite. Functionally, plays a role in intracellular protein trafficking and degradation. May regulate CFTR chloride currents and acid-induced ASIC3 currents by modulating cell surface expression of both channels. May also regulate the intracellular trafficking of the ADR1B receptor. May play a role in autophagy. Together with MARCHF2 mediates the ubiquitination and lysosomal degradation of CFTR. Overexpression results in CFTR intracellular retention and degradation in the lysosomes. This chain is Golgi-associated PDZ and coiled-coil motif-containing protein (GOPC), found in Pongo abelii (Sumatran orangutan).